Reading from the N-terminus, the 132-residue chain is Chemokine-like protein TAFA-5 (132 aa).

An N-terminal signal peptide occupies residues 1-43 (MAPSPRTSSRQDATALPSMSSTFWAFMILASLLIAYCSQLAAG). Asn-113 is a glycosylation site (N-linked (GlcNAc...) asparagine).

It belongs to the TAFA family. Expressed in the subcutaneous, brown, epididymal and perirenal adipose tissue (at protein level).

The protein localises to the secreted. Its function is as follows. Acts as a chemokine-like protein by regulating cell proliferation and migration through activation of G protein-coupled receptors (GPCRs), such as S1PR2 and FPR2. Stimulates chemotactic migration of macrophages mediated by the MAPK3/ERK1 and AKT1 pathway. Blocks TNFSF11/RANKL-induced osteoclast formation from macrophages by inhibiting up-regulation of osteoclast fusogenic and differentiation genes. Stimulation of macrophage migration and inhibition of osteoclast formation is mediated through the GPCR FPR2. Acts as an adipokine by negatively regulating vascular smooth muscle cell (VSMC) proliferation and migration in response to platelet-derived growth factor stimulation via GPCR S1PR2 and G protein GNA12/GNA13-transmitted RHOA signaling. Inhibits injury-induced cell proliferation and neointima formation in the femoral arteries. In Mus musculus (Mouse), this protein is Chemokine-like protein TAFA-5 (Tafa5).